The primary structure comprises 528 residues: MGQEMSTQSDMQNENQKGNKRNLKGSQGKNGLKERSTSISKEIVKNSFNNSKLRPGMFIQNSNVVFNEQYKGIKILGKGSFGEVILSKDKHTGHEYAIKVISKKHVKRKTDKQSLLREVELLKMLDHINIMKLYEFFEDNNYYYLVSDVYSGGELFDEIISRKRFYEVDAARIIKQVLSGITYMHKNNVVHRDLKPENILLETKNKEDMIIKIIDFGLSTHFEYSKKMKDKIGTAYYIAPDVLHGTYDEKCDIWSCGVILYILLSGCPPFNGSNEYDILKKVETGKYTFDLPQFKKISDKAKDLIKKMLMYTSAVRISARDALEHEWIRLMTSKDNVNIDIPSLELSITNIKQFQSTQKLAQAALLYMGSKLTTIDETKELTKIFKKMDKNGDGQLDRNELIIGYKELLKLKGDDTTDLDNAAIEVEVDQILSSIDLDQNGYIEYSEFLTVAIDRKLLLSTERLEKAFKLFDKDGSGKISANELAQLFGLGDVSSDCWKTVLKEVDQNNDGEIDFKEFRDMLIKLCNY.

Residues 1–16 (MGQEMSTQSDMQNENQ) show a composition bias toward polar residues. The disordered stretch occupies residues 1–36 (MGQEMSTQSDMQNENQKGNKRNLKGSQGKNGLKERS). Residue Gly2 is the site of N-myristoyl glycine attachment. Residues 70 to 328 (YKGIKILGKG…ARDALEHEWI (259 aa)) enclose the Protein kinase domain. Residues 76–84 (LGKGSFGEV) and Lys99 each bind ATP. Asp193 (proton acceptor) is an active-site residue. The short motif at 350–358 (NIKQFQSTQ) is the J domain autoinhibitory motif element. The j domain stretch occupies residues 350 to 386 (NIKQFQSTQKLAQAALLYMGSKLTTIDETKELTKIFK). The short motif at 359–368 (KLAQAALLYM) is the J domain EF-hand interaction motif element. EF-hand domains follow at residues 376–411 (DETKELTKIFKKMDKNGDGQLDRNELIIGYKELLKL), 423–458 (AIEVEVDQILSSIDLDQNGYIEYSEFLTVAIDRKLL), 459–494 (LSTERLEKAFKLFDKDGSGKISANELAQLFGLGDVS), and 498–528 (WKTVLKEVDQNNDGEIDFKEFRDMLIKLCNY). Asp389, Asn391, Asp393, Gln395, Glu400, Asp436, Asp438, Asn440, Tyr442, Glu447, Asp472, Asp474, Ser476, Lys478, Glu483, Asp506, Asn508, Asp510, Glu512, and Glu517 together coordinate Ca(2+).

The protein belongs to the protein kinase superfamily. Ser/Thr protein kinase family. CDPK subfamily. In terms of assembly, may interact with the pre-replication MCM complex prior male gametogenesis activation. Mg(2+) is required as a cofactor. Post-translationally, myristoylated; myristoylation may target it to different subcellular compartments. During male gametogenesis, myristoylation is required to initiate DNA replication but not for mitotic spindle assembly or axoneme activation. Not palmitoylated. In terms of processing, may be autophosphorylated on Thr-234 in vitro.

The protein localises to the cytoplasm. The protein resides in the membrane. Its subcellular location is the chromosome. The catalysed reaction is L-seryl-[protein] + ATP = O-phospho-L-seryl-[protein] + ADP + H(+). It catalyses the reaction L-threonyl-[protein] + ATP = O-phospho-L-threonyl-[protein] + ADP + H(+). Activated by calcium. Upon calcium binding to the EF-hand domains, the C-terminus of the junction domain (J domain) undergoes a conformational change which results in the dissociation of the pseudo-substrate inhibitory motif from the catalytic domain. This, in turn, may facilitate the autophosphorylation of the activation loop at Thr-234, which leads to the kinase activation. Intracellular calcium increase is triggered by xanthurenic acid (XA), a small mosquito molecule that induces the differentiation of specialized transmission stages, the gametocytes, into male and female gametes. Activated by a decrease in temperature (20 degrees Celsius) and an increase in pH (7.6) occurring when the parasite is ingested by in the mosquito. Its function is as follows. Calcium-dependent protein kinase which acts as a sensor and effector of intracellular Ca(2+) levels probably in part downstream of cGMP-activated PKG kinase. Plays a central role in the host erythrocytes and hepatocytes infection cycles, sexual reproduction and mosquito transmission of the parasite. During the liver stage, involved in sporozoite motility and thus in sporozoite invasion of host hepatocytes, probably together with CDPK1 and CDPK5. Involved in merosome egress from host hepatocytes, probably together with CDPK5. During the asexual blood stage, involved in merozoite invasion of host erythrocytes and motility by stabilizing the inner membrane complex, a structure below the plasma membrane which acts as an anchor for the glidosome, an acto-myosin motor. Required for cell cycle progression in the male gametocyte. During male gametogenesis in the mosquito gut, required to initiate the first round of DNA replication, probably by facilitating the assembly of the pre-replicative MCM complex, to assemble the first mitotic spindle and, at the end of gametogenesis, to initiate axoneme motility, cytokinesis and subsequent exflagellation. For each of these steps, may phosphorylate SOC1, SOC2 and SOC3, respectively. Together with CDPK1, regulates ookinete gliding in the mosquito host midgut. Functionally, during male gametogenesis in the mosquito gut, required to initiate the first round of DNA replication, probably by facilitating the assembly of the pre-replicative MCM complex, and to assemble the first mitotic spindle. At the end of male gametogenesis in the mosquito gut, required to initiate axoneme motility, cytokinesis and subsequent exflagellation. This chain is Calcium-dependent protein kinase 4, found in Plasmodium berghei (strain Anka).